Here is a 68-residue protein sequence, read N- to C-terminus: MSLEQRVTELESRLAFQDDTIQALNDVLVEQQRVVERLQLQMAAVLKRQEEMVGQFGSFEEDAPPPHY.

The protein belongs to the SlyX family.

This is Protein SlyX homolog from Pseudomonas fluorescens (strain Pf0-1).